Reading from the N-terminus, the 557-residue chain is 6-phosphofructo-2-kinase/fructose-2,6-bisphosphatase 2 (557 aa).

The span at 1 to 16 (MSENSTFSTEDSSSSS) shows a compositional bias: low complexity. A disordered region spans residues 1–21 (MSENSTFSTEDSSSSSYKPHA). Position 2 is an N-acetylserine (S2). The tract at residues 2–251 (SENSTFSTED…VYYLMNIHVH (250 aa)) is 6-phosphofructo-2-kinase. Residue S32 is modified to Phosphoserine; by PKA. 48–56 (GLPARGKTY) serves as a coordination point for ATP. Beta-D-fructose 6-phosphate-binding residues include R81 and R105. Residue D131 is part of the active site. Beta-D-fructose 6-phosphate-binding residues include T133 and R139. Residue C161 is part of the active site. 170 to 175 (NILEVK) provides a ligand contact to ATP. K175, R196, and Y200 together coordinate beta-D-fructose 6-phosphate. Residues 252-557 (PRTIYLCRHG…PSMASLTLLS (306 aa)) are fructose-2,6-bisphosphatase. R259 contributes to the beta-D-fructose 2,6-bisphosphate binding site. The active-site Tele-phosphohistidine intermediate is H260. Beta-D-fructose 2,6-bisphosphate-binding residues include N266 and G272. The active-site Proton donor/acceptor is the E329. Beta-D-fructose 2,6-bisphosphate-binding residues include Y340, R354, K358, Y369, Q395, and R399. 351-354 (FALR) provides a ligand contact to ATP. ATP-binding positions include 395-399 (QAVMR) and Y431. The interval 449 to 495 (RDKPTHNFPKSQTPVRMRRNSFTPLSSSNTIRRPRNYSVGSRPLKPL) is disordered. Residues 456–479 (FPKSQTPVRMRRNSFTPLSSSNTI) are compositionally biased toward polar residues. A Phosphoserine modification is found at S469. T471 carries the post-translational modification Phosphothreonine. A Phosphothreonine; by PKC modification is found at T478. 2 positions are modified to phosphoserine: S486 and S496.

This sequence in the C-terminal section; belongs to the phosphoglycerate mutase family. Homodimer. Forms a heterodimer with PFKFB3. Phosphorylation by AMPK stimulates activity.

The catalysed reaction is beta-D-fructose 2,6-bisphosphate + H2O = beta-D-fructose 6-phosphate + phosphate. It carries out the reaction beta-D-fructose 6-phosphate + ATP = beta-D-fructose 2,6-bisphosphate + ADP + H(+). Its activity is regulated as follows. Phosphorylation results in the activation of the kinase activity. Synthesis and degradation of fructose 2,6-bisphosphate. The protein is 6-phosphofructo-2-kinase/fructose-2,6-bisphosphatase 2 (Pfkfb2) of Rattus norvegicus (Rat).